We begin with the raw amino-acid sequence, 228 residues long: Ribosomal RNA small subunit methyltransferase G (228 aa).

Residues Gly89, Leu94, 140-141, and Arg159 contribute to the S-adenosyl-L-methionine site; that span reads VE.

This sequence belongs to the methyltransferase superfamily. RNA methyltransferase RsmG family.

It localises to the cytoplasm. It catalyses the reaction guanosine(527) in 16S rRNA + S-adenosyl-L-methionine = N(7)-methylguanosine(527) in 16S rRNA + S-adenosyl-L-homocysteine. Specifically methylates the N7 position of guanine in position 527 of 16S rRNA. The chain is Ribosomal RNA small subunit methyltransferase G from Burkholderia lata (strain ATCC 17760 / DSM 23089 / LMG 22485 / NCIMB 9086 / R18194 / 383).